The chain runs to 850 residues: Receptor-like protein kinase ANXUR1 (850 aa).

The first 26 residues, Met1–Gly26, serve as a signal peptide directing secretion. At Gln27–His429 the chain is on the extracellular side. N-linked (GlcNAc...) asparagine glycans are attached at residues Asn114, Asn132, Asn292, Asn302, and Asn330. A helical transmembrane segment spans residues Ala430 to Thr450. Over Ala451–Arg850 the chain is Cytoplasmic. Positions Phe517 to Ala790 constitute a Protein kinase domain. ATP-binding positions include Ile523 to Val531 and Lys545. The active-site Proton acceptor is Asp641. Residues Thr796–Arg850 are disordered. Over residues Glu839–Arg850 the composition is skewed to polar residues.

It belongs to the protein kinase superfamily. Ser/Thr protein kinase family. Expressed in pollen, but not in pistils or seedlings.

It is found in the cell membrane. It catalyses the reaction L-seryl-[protein] + ATP = O-phospho-L-seryl-[protein] + ADP + H(+). The catalysed reaction is L-threonyl-[protein] + ATP = O-phospho-L-threonyl-[protein] + ADP + H(+). In terms of biological role, receptor-like protein kinase that controls pollen tube behavior by directing rupture at proper timing to release the sperm cell. The protein is Receptor-like protein kinase ANXUR1 (ANX1) of Arabidopsis thaliana (Mouse-ear cress).